Reading from the N-terminus, the 57-residue chain is Small ribosomal subunit protein bS21 (57 aa).

Belongs to the bacterial ribosomal protein bS21 family.

This chain is Small ribosomal subunit protein bS21, found in Phytoplasma australiense.